The sequence spans 124 residues: Type-4 ice-structuring protein (124 aa).

The first 20 residues, 1–20, serve as a signal peptide directing secretion; it reads MKFSLIAAVALLALAQGSFA. Pyrrolidone carboxylic acid is present on glutamine 21.

This sequence belongs to the apolipoprotein A1/A4/E family.

The protein localises to the secreted. Antifreeze proteins lower the blood freezing point. The sequence is that of Type-4 ice-structuring protein from Paralichthys olivaceus (Bastard halibut).